The sequence spans 251 residues: Lactose phosphotransferase system repressor (251 aa).

Residues 3–58 enclose the HTH deoR-type domain; it reads KEERLEEITKLINKRGTIRVTEVVERLKVSDMTVRRDLTELEGLGVLTRIHGGARS. Residues 20-39 constitute a DNA-binding region (H-T-H motif); the sequence is IRVTEVVERLKVSDMTVRRD.

In terms of biological role, repressor of the lactose catabolism operon. Galactose-6-phosphate is the inducer. The sequence is that of Lactose phosphotransferase system repressor (lacR) from Streptococcus mutans serotype c (strain ATCC 700610 / UA159).